The sequence spans 303 residues: tRNA pseudouridine synthase B (303 aa).

Asp-46 functions as the Nucleophile in the catalytic mechanism.

This sequence belongs to the pseudouridine synthase TruB family. Type 1 subfamily.

The enzyme catalyses uridine(55) in tRNA = pseudouridine(55) in tRNA. Responsible for synthesis of pseudouridine from uracil-55 in the psi GC loop of transfer RNAs. The sequence is that of tRNA pseudouridine synthase B from Hydrogenovibrio crunogenus (strain DSM 25203 / XCL-2) (Thiomicrospira crunogena).